The chain runs to 198 residues: MEHYISLFVRAVFIENMALAFFLGMCTFLAVSKNVKTAFGLGIAVTVVLGLSVPLNNLVYNYVLRANALMEGVDLSFLNFITFIGVIAALVQILEMILDRYFPSLYNALGIFLPLITVNCAIFGGVSFMAQRDYNFSESIVYGFGSGIGWMLAIVLLASIREKMKYADVPSGMKGLGVTFVTTGLMALGFMSFSGVQL.

The next 6 helical transmembrane spans lie at 11–31, 39–59, 77–97, 109–129, 140–160, and 176–196; these read AVFI…FLAV, FGLG…NNLV, FLNF…LEMI, LGIF…VSFM, IVYG…LASI, and LGVT…FSGV.

The protein belongs to the NqrDE/RnfAE family. As to quaternary structure, composed of six subunits; NqrA, NqrB, NqrC, NqrD, NqrE and NqrF.

Its subcellular location is the cell inner membrane. The catalysed reaction is a ubiquinone + n Na(+)(in) + NADH + H(+) = a ubiquinol + n Na(+)(out) + NAD(+). Its function is as follows. NQR complex catalyzes the reduction of ubiquinone-1 to ubiquinol by two successive reactions, coupled with the transport of Na(+) ions from the cytoplasm to the periplasm. NqrA to NqrE are probably involved in the second step, the conversion of ubisemiquinone to ubiquinol. This chain is Na(+)-translocating NADH-quinone reductase subunit E, found in Proteus mirabilis (strain HI4320).